A 468-amino-acid chain; its full sequence is MNPLQPIQHSITNSQMSGGQQLEAEGSQAHNSYSHPDRISLSQLSQSAHLALDHLSTQPNTDHQRVASLVRNAVQDGKFQLQSSNDTQVTYKTSVCPPANADTMGAAHLINNELTVQARLNDQLEYDIVSAHLYGPSEAISIDASSPPSANDLASSGLSERTHLGMNRVLLRYAVPPRETEDQCVMVIDKMPPPKHGKMSFFRTTNDLSKLPLGMETGGLSDLKLAGCERISSVEQVKSIRAALGGGPLTVLDLREESHAIVNGLPITLRGPMDWANAGLSQVDGAARESAMITELKRTKSLTLVDANYVKGKKSNPQTTELKNLNVRSEREVVTEAGATYRRVAITDHNRPSPEATDELVDIMRHCLQANESLVVHCNGGRGRTTTAMIMVDMLKNARNHSAETLITRMAKLSYDYNMTDLGSISALKRPFLEDRLKFLQAFHDYARNNPSGLSLNWTQWRAKIALE.

Over residues 1–20 (MNPLQPIQHSITNSQMSGGQ) the composition is skewed to polar residues. Residues 1–35 (MNPLQPIQHSITNSQMSGGQQLEAEGSQAHNSYSH) are disordered. In terms of domain architecture, Tyrosine-protein phosphatase spans 143–468 (DASSPPSAND…TQWRAKIALE (326 aa)). Residue Cys378 is the Phosphocysteine intermediate of the active site.

Interacts with EFR and FLS2 (via the kinase and cytoplasmic domains).

It is found in the secreted. It catalyses the reaction O-phospho-L-tyrosyl-[protein] + H2O = L-tyrosyl-[protein] + phosphate. Its activity is regulated as follows. Inhibited by sodium orthovanadate. In terms of biological role, effector showing tyrosine-phosphatase activity required for host defense suppression. Functions inside plant cells causing suppression of HR (hypersensitive response), PR1 gene expression and oxidative burst probably by interfering with a MAPK (mitogen-activated protein kinase) pathway. MAPK cascades are known to activate defense-related transcription factors. Inhibits plant pattern-recognition receptors (PRRs) activation. The protein is Effector protein hopD2 (hopD2) of Pseudomonas syringae pv. tomato (strain ATCC BAA-871 / DC3000).